Here is a 117-residue protein sequence, read N- to C-terminus: Cuticle protein CP1243 (117 aa).

4 consecutive repeat copies span residues 1-17 (NYGE…LVQF), 26-43 (AEIG…HVQF), 67-84 (QPYG…NRQF), and 93-110 (VLVG…NVQF).

In terms of tissue distribution, calcified shell.

The sequence is that of Cuticle protein CP1243 from Cancer pagurus (Rock crab).